Consider the following 238-residue polypeptide: MVTPHINAKKGDFSDCVLMPGDPLRARYIAKNYLKNAIEVTNIRSMLGYTGRYKGHRISVMSHGIGIPSSLIYVKELVSEYNVKKIIRIGTCGTVIEHININDIIICLGASTDSKVNRLRFHDNDFSSVADFYLILDLFNSANNAGIKINIGNFFTTDLFYVKNDKLLDTLQRYNILGIDMETAGIYSLASELGIQVASICTVSDHILKKDQMSYIDRESNLNNMIYISLEALILKKV.

His5 is a binding site for a purine D-ribonucleoside. Residues Gly21, Arg25, Arg44, and 88–91 (RIGT) each bind phosphate. Residues 180–182 (DME) and 204–205 (SD) each bind a purine D-ribonucleoside. The active-site Proton donor is the Asp205.

Belongs to the PNP/UDP phosphorylase family. Homohexamer; trimer of homodimers.

The enzyme catalyses a purine D-ribonucleoside + phosphate = a purine nucleobase + alpha-D-ribose 1-phosphate. The catalysed reaction is a purine 2'-deoxy-D-ribonucleoside + phosphate = a purine nucleobase + 2-deoxy-alpha-D-ribose 1-phosphate. Functionally, catalyzes the reversible phosphorolytic breakdown of the N-glycosidic bond in the beta-(deoxy)ribonucleoside molecules, with the formation of the corresponding free purine bases and pentose-1-phosphate. This Buchnera aphidicola subsp. Baizongia pistaciae (strain Bp) protein is Purine nucleoside phosphorylase DeoD-type.